Reading from the N-terminus, the 269-residue chain is Sulfur carrier protein FdhD (269 aa).

Residue C111 is the Cysteine persulfide intermediate of the active site.

It belongs to the FdhD family.

It localises to the cytoplasm. Required for formate dehydrogenase (FDH) activity. Acts as a sulfur carrier protein that transfers sulfur from IscS to the molybdenum cofactor prior to its insertion into FDH. The sequence is that of Sulfur carrier protein FdhD from Brucella melitensis biotype 1 (strain ATCC 23456 / CCUG 17765 / NCTC 10094 / 16M).